Consider the following 137-residue polypeptide: Holo-[acyl-carrier-protein] synthase (137 aa).

2 residues coordinate Mg(2+): Asp7 and Glu58.

Belongs to the P-Pant transferase superfamily. AcpS family. Requires Mg(2+) as cofactor.

It is found in the cytoplasm. The catalysed reaction is apo-[ACP] + CoA = holo-[ACP] + adenosine 3',5'-bisphosphate + H(+). In terms of biological role, transfers the 4'-phosphopantetheine moiety from coenzyme A to a Ser of acyl-carrier-protein. This is Holo-[acyl-carrier-protein] synthase from Chloroflexus aurantiacus (strain ATCC 29366 / DSM 635 / J-10-fl).